A 716-amino-acid polypeptide reads, in one-letter code: Exocyst complex component 8 (716 aa).

At Ser15 the chain carries Phosphoserine. The tract at residues 129-150 (GFLPGPAGVPREGSGTGEEGKQ) is disordered. One can recognise a PH domain in the interval 173–273 (YLVYNGDLVE…WLEVLEETKR (101 aa)). The span at 275-284 (LSDKRRREQE) shows a compositional bias: basic and acidic residues. The interval 275-319 (LSDKRRREQEEAAAPRAPPPVTSKGSNPFEDEDDEELATPEAEEE) is disordered. Acidic residues predominate over residues 303–319 (FEDEDDEELATPEAEEE). Position 313 is a phosphothreonine (Thr313).

This sequence belongs to the EXO84 family. As to quaternary structure, the exocyst complex is composed of EXOC1, EXOC2, EXOC3, EXOC4, EXOC5, EXOC6, EXOC7 and EXOC8. Interacts (via PH domain) with GTP-bound RALA and RALB. Interacts with SH3BP1; required for the localization of both SH3BP1 and the exocyst to the leading edge of migrating cells.

It is found in the cytoplasm. The protein resides in the perinuclear region. It localises to the cell projection. The protein localises to the growth cone. Functionally, component of the exocyst complex involved in the docking of exocytic vesicles with fusion sites on the plasma membrane. The polypeptide is Exocyst complex component 8 (Exoc8) (Mus musculus (Mouse)).